A 330-amino-acid chain; its full sequence is Cytosolic iron-sulfur protein assembly protein 1 (330 aa).

WD repeat units follow at residues 12–53 (LYKE…DVLD), 56–95 (AHKK…DRTF), 105–144 (GHEN…EEYE), 151–190 (EHSQ…WECV), 195–236 (GHEG…EDDQ), 248–286 (VHKR…WKVF), and 292–330 (CHGV…EKAA).

The protein belongs to the WD repeat CIA1 family. Interacts with NAR1.

The protein resides in the cytoplasm. Its subcellular location is the nucleus. Essential component of the cytosolic iron-sulfur (Fe/S) protein assembly machinery. Required for the maturation of extramitochondrial Fe/S proteins. This chain is Cytosolic iron-sulfur protein assembly protein 1, found in Saccharomyces cerevisiae (strain ATCC 204508 / S288c) (Baker's yeast).